The primary structure comprises 632 residues: Chaperone protein DnaK (632 aa).

Thr198 bears the Phosphothreonine; by autocatalysis mark. Residues 599-632 (YKKAGASQQGAGSTTQSKKEEDVIEAEVEDKDNK) form a disordered region. Positions 604–614 (ASQQGAGSTTQ) are enriched in polar residues. Residues 620–632 (DVIEAEVEDKDNK) are compositionally biased toward acidic residues.

This sequence belongs to the heat shock protein 70 family.

In terms of biological role, acts as a chaperone. In Thermodesulfovibrio yellowstonii (strain ATCC 51303 / DSM 11347 / YP87), this protein is Chaperone protein DnaK.